Here is a 198-residue protein sequence, read N- to C-terminus: Recombination protein RecR (198 aa).

Residues 57–72 form a C4-type zinc finger; the sequence is CSICGNLTDDDPCHIC. Residues 80 to 175 enclose the Toprim domain; that stretch reads TTILVVEDAK…KVTRLARGLA (96 aa).

It belongs to the RecR family.

In terms of biological role, may play a role in DNA repair. It seems to be involved in an RecBC-independent recombinational process of DNA repair. It may act with RecF and RecO. The chain is Recombination protein RecR from Streptococcus pyogenes serotype M1.